Here is a 100-residue protein sequence, read N- to C-terminus: Urease subunit gamma (100 aa).

The protein belongs to the urease gamma subunit family. Heterotrimer of UreA (gamma), UreB (beta) and UreC (alpha) subunits. Three heterotrimers associate to form the active enzyme.

It localises to the cytoplasm. It carries out the reaction urea + 2 H2O + H(+) = hydrogencarbonate + 2 NH4(+). It participates in nitrogen metabolism; urea degradation; CO(2) and NH(3) from urea (urease route): step 1/1. This Limosilactobacillus fermentum (Lactobacillus fermentum) protein is Urease subunit gamma.